The following is a 157-amino-acid chain: Cyclic pyranopterin monophosphate synthase (157 aa).

Substrate-binding positions include Met-74 to His-76 and Met-112 to Glu-113. The active site involves Asp-127.

The protein belongs to the MoaC family. Homohexamer; trimer of dimers.

The catalysed reaction is (8S)-3',8-cyclo-7,8-dihydroguanosine 5'-triphosphate = cyclic pyranopterin phosphate + diphosphate. Its pathway is cofactor biosynthesis; molybdopterin biosynthesis. Catalyzes the conversion of (8S)-3',8-cyclo-7,8-dihydroguanosine 5'-triphosphate to cyclic pyranopterin monophosphate (cPMP). The sequence is that of Cyclic pyranopterin monophosphate synthase from Campylobacter jejuni subsp. jejuni serotype O:23/36 (strain 81-176).